Here is a 542-residue protein sequence, read N- to C-terminus: Chaperonin GroEL 1 (542 aa).

Residues 29 to 32 (TIGP), 86 to 90 (DGTTT), glycine 414, 479 to 481 (DAL), and aspartate 495 each bind ATP.

Belongs to the chaperonin (HSP60) family. Forms a cylinder of 14 subunits composed of two heptameric rings stacked back-to-back. Interacts with the co-chaperonin GroES.

The protein localises to the cytoplasm. It catalyses the reaction ATP + H2O + a folded polypeptide = ADP + phosphate + an unfolded polypeptide.. Together with its co-chaperonin GroES, plays an essential role in assisting protein folding. The GroEL-GroES system forms a nano-cage that allows encapsulation of the non-native substrate proteins and provides a physical environment optimized to promote and accelerate protein folding. The sequence is that of Chaperonin GroEL 1 from Synechococcus sp. (strain JA-3-3Ab) (Cyanobacteria bacterium Yellowstone A-Prime).